The chain runs to 386 residues: 8-amino-7-oxononanoate synthase (386 aa).

Arg-19 contributes to the substrate binding site. A pyridoxal 5'-phosphate-binding site is contributed by 106-107; that stretch reads GY. His-131 is a substrate binding site. Pyridoxal 5'-phosphate-binding residues include Ser-177, His-205, and Thr-233. Lys-236 is subject to N6-(pyridoxal phosphate)lysine. Thr-350 is a binding site for substrate.

It belongs to the class-II pyridoxal-phosphate-dependent aminotransferase family. BioF subfamily. As to quaternary structure, homodimer. Pyridoxal 5'-phosphate serves as cofactor.

The enzyme catalyses 6-carboxyhexanoyl-[ACP] + L-alanine + H(+) = (8S)-8-amino-7-oxononanoate + holo-[ACP] + CO2. Its pathway is cofactor biosynthesis; biotin biosynthesis. Catalyzes the decarboxylative condensation of pimeloyl-[acyl-carrier protein] and L-alanine to produce 8-amino-7-oxononanoate (AON), [acyl-carrier protein], and carbon dioxide. In Alcanivorax borkumensis (strain ATCC 700651 / DSM 11573 / NCIMB 13689 / SK2), this protein is 8-amino-7-oxononanoate synthase.